A 395-amino-acid chain; its full sequence is 1-deoxy-D-xylulose 5-phosphate reductoisomerase (395 aa).

Residues T10, G11, S12, I13, A36, and N123 each coordinate NADPH. K124 contacts 1-deoxy-D-xylulose 5-phosphate. Position 125 (E125) interacts with NADPH. D149 contributes to the Mn(2+) binding site. 4 residues coordinate 1-deoxy-D-xylulose 5-phosphate: S150, E151, S185, and H208. E151 lines the Mn(2+) pocket. G214 is a binding site for NADPH. Positions 221, 226, 227, and 230 each coordinate 1-deoxy-D-xylulose 5-phosphate. E230 is a binding site for Mn(2+).

It belongs to the DXR family. Requires Mg(2+) as cofactor. It depends on Mn(2+) as a cofactor.

The catalysed reaction is 2-C-methyl-D-erythritol 4-phosphate + NADP(+) = 1-deoxy-D-xylulose 5-phosphate + NADPH + H(+). It participates in isoprenoid biosynthesis; isopentenyl diphosphate biosynthesis via DXP pathway; isopentenyl diphosphate from 1-deoxy-D-xylulose 5-phosphate: step 1/6. Its function is as follows. Catalyzes the NADPH-dependent rearrangement and reduction of 1-deoxy-D-xylulose-5-phosphate (DXP) to 2-C-methyl-D-erythritol 4-phosphate (MEP). The protein is 1-deoxy-D-xylulose 5-phosphate reductoisomerase of Shewanella amazonensis (strain ATCC BAA-1098 / SB2B).